A 142-amino-acid polypeptide reads, in one-letter code: MGLKLNGRYISLILAVQIAYLVQAVRAAGKCDAVFKGFSDCLLKLGDSMANYPQGLDDKTNIKTVCTYWEDFHSCTVTALTDCQEGAKDMWDKLRKESKNLNIQGSLFELCGSGNGAAGSLLPAFPVLLVSLSAALATWLSF.

An N-terminal signal peptide occupies residues 1–27 (MGLKLNGRYISLILAVQIAYLVQAVRA). Gly-116 carries GPI-anchor amidated glycine lipidation. Residues 117–142 (AAGSLLPAFPVLLVSLSAALATWLSF) constitute a propeptide, removed in mature form.

It belongs to the neuritin family. In terms of assembly, component of the outer core of AMPAR complex. AMPAR complex consists of an inner core made of 4 pore-forming GluA/GRIA proteins (GRIA1, GRIA2, GRIA3 and GRIA4) and 4 major auxiliary subunits arranged in a twofold symmetry. One of the two pairs of distinct binding sites is occupied either by CNIH2, CNIH3 or CACNG2, CACNG3. The other harbors CACNG2, CACNG3, CACNG4, CACNG8 or GSG1L. This inner core of AMPAR complex is complemented by outer core constituents binding directly to the GluA/GRIA proteins at sites distinct from the interaction sites of the inner core constituents. Outer core constituents include at least PRRT1, PRRT2, CKAMP44/SHISA9, FRRS1L and NRN1. The proteins of the inner and outer core serve as a platform for other, more peripherally associated AMPAR constituents. Alone or in combination, these auxiliary subunits control the gating and pharmacology of the AMPAR complex and profoundly impact their biogenesis and protein processing.

It is found in the cell membrane. The protein resides in the synapse. Functionally, promotes neurite outgrowth and especially branching of neuritic processes in primary hippocampal and cortical cells. This Homo sapiens (Human) protein is Neuritin (NRN1).